Reading from the N-terminus, the 187-residue chain is uncharacterized protein (187 aa).

This is an uncharacterized protein from Homo sapiens (Human).